We begin with the raw amino-acid sequence, 326 residues long: DNA repair protein XRCC4 (326 aa).

The interaction with IFFO1 stretch occupies residues 1-212 (MERKVSRIYL…QLEESTKPER (212 aa)). Ser53 is modified (phosphoserine; by PRKDC). 2 coiled-coil regions span residues 131 to 165 (LDTI…FEKC) and 185 to 209 (NEKK…ESTK). An interaction with LIG4 region spans residues 180–211 (FILVLNEKKTKIRSLHKLLNEVQQLEESTKPE). Residue Ser193 is modified to Phosphoserine; by PRKDC. Residues 203-326 (QLEESTKPER…RNSSPEDLFD (124 aa)) form a disordered region. The span at 206 to 226 (ESTKPERENPCSDKTPEEHGL) shows a compositional bias: basic and acidic residues. Tyr227 carries the phosphotyrosine modification. Ser230 carries the post-translational modification Phosphoserine. Thr231 carries the phosphothreonine modification. Ser235 carries the post-translational modification Phosphoserine. Phosphothreonine is present on Thr244. At Ser250 the chain carries Phosphoserine. Ser254 carries the phosphoserine; by PRKDC modification. Residues 264-269 (RKRRHR) carry the Nuclear localization signal motif. A Glycyl lysine isopeptide (Lys-Gly) (interchain with G-Cter in ubiquitin) cross-link involves residue Lys290. Ser295 bears the Phosphoserine; by PRKDC mark. At Ser296 the chain carries Phosphoserine. Phosphoserine; by PRKDC occurs at positions 307 and 312. Polar residues predominate over residues 307-326 (SAENMSLETLRNSSPEDLFD). Thr315 is modified (phosphothreonine; by PRKDC). A phosphoserine; by PRKDC mark is found at Ser319 and Ser320.

The protein belongs to the XRCC4-XLF family. XRCC4 subfamily. In terms of assembly, homodimer and homotetramer in solution. Interacts with NHEJ1/XLF; the interaction is direct and is mediated via a head-to-head interaction between N-terminal head regions. Interacts with LIG4; the LIG4-XRCC4 subcomplex has a 1:2 stoichiometry and XRCC4 is required for LIG4 stability. Component of the core long-range non-homologous end joining (NHEJ) complex (also named DNA-PK complex) composed of PRKDC, LIG4, XRCC4, XRCC6/Ku70, XRCC5/Ku86 and NHEJ1/XLF. Additional component of the NHEJ complex includes PAXX. Following autophosphorylation, PRKDC dissociates from DNA, leading to formation of the short-range NHEJ complex, composed of LIG4, XRCC4, XRCC6/Ku70, XRCC5/Ku86 and NHEJ1/XLF. Interacts with PRKDC; the interaction is direct. Interacts with XRCC6/Ku70; the interaction is direct. Interacts with APTX and APLF. Forms a heterotetramer with IFFO1; the interaction involves LIG4-free XRCC4 and leads to the relocalization of IFFO1 to the sites of DNA damage. Interacts with PNKP; mainly interacts with PNKP when phosphorylated at Thr-231, but is also able to interact at much lower level with PNKP when not unphosphorylated. Interacts with POLL (DNA polymerase lambda). As to quaternary structure, interacts with XKR4; interacts with the processed form of XKR4, which is cleaved by caspase. In terms of processing, phosphorylated by PRKDC at the C-terminus in response to DNA damage; Ser-254 and Ser-312 constitute the main phosphorylation sites. Phosphorylation by PRKDC at the C-terminus of XRCC4 and NHEJ1/XLF are highly redundant and regulate ability of the XRCC4-NHEJ1/XLF subcomplex to bridge DNA. Phosphorylation by PRKDC does not prevent interaction with NHEJ1/XLF but disrupts ability to bridge DNA and promotes detachment from DNA. Phosphorylation at Ser-319 and Ser-320 by PRKDC promotes recognition by the SCF(FBXW7) complex and subsequent ubiquitination via 'Lys-63'-linked ubiquitin. Phosphorylation at Thr-231 by CK2 promotes interaction with PNKP; regulating PNKP activity and localization to DNA damage sites. Phosphorylation by CK2 promotes interaction with APTX. Ubiquitinated at Lys-290 by the SCF(FBXW7) complex via 'Lys-63'-linked ubiquitination, thereby promoting double-strand break repair: the SCF(FBXW7) complex specifically recognizes XRCC4 when phosphorylated at Ser-319 and Ser-320 by PRKDC, and 'Lys-63'-linked ubiquitination facilitates DNA non-homologous end joining (NHEJ) by enhancing association with XRCC5/Ku80 and XRCC6/Ku70. Monoubiquitinated. Post-translationally, undergoes proteolytic processing by caspase-3 (CASP3). This generates the protein XRCC4, C-terminus (XRCC4/C), which translocates to the cytoplasm and activates phospholipid scramblase activity of XKR4, thereby promoting phosphatidylserine exposure on apoptotic cell surface.

Its subcellular location is the nucleus. The protein localises to the chromosome. The protein resides in the cytoplasm. In terms of biological role, DNA non-homologous end joining (NHEJ) core factor, required for double-strand break repair and V(D)J recombination. Acts as a scaffold protein that regulates recruitment of other proteins to DNA double-strand breaks (DSBs). Associates with NHEJ1/XLF to form alternating helical filaments that bridge DNA and act like a bandage, holding together the broken DNA until it is repaired. The XRCC4-NHEJ1/XLF subcomplex binds to the DNA fragments of a DSB in a highly diffusive manner and robustly bridges two independent DNA molecules, holding the broken DNA fragments in close proximity to one other. The mobility of the bridges ensures that the ends remain accessible for further processing by other repair factors. Plays a key role in the NHEJ ligation step of the broken DNA during DSB repair via direct interaction with DNA ligase IV (LIG4): the LIG4-XRCC4 subcomplex reseals the DNA breaks after the gap filling is completed. XRCC4 stabilizes LIG4, regulates its subcellular localization and enhances LIG4's joining activity. Binding of the LIG4-XRCC4 subcomplex to DNA ends is dependent on the assembly of the DNA-dependent protein kinase complex DNA-PK to these DNA ends. Promotes displacement of PNKP from processed strand break termini. Acts as an activator of the phospholipid scramblase activity of XKR4. This form, which is generated upon caspase-3 (CASP3) cleavage, translocates into the cytoplasm and interacts with XKR4, thereby promoting phosphatidylserine scramblase activity of XKR4 and leading to phosphatidylserine exposure on apoptotic cell surface. This Mus musculus (Mouse) protein is DNA repair protein XRCC4.